A 1286-amino-acid chain; its full sequence is DNA-directed RNA polymerase 147 kDa polypeptide (1286 aa).

It belongs to the poxviridae DNA-directed RNA polymerase 147 kDa subunit family. As to quaternary structure, the DNA-dependent RNA polymerase used for intermediate and late genes expression consists of eight subunits Rpo30/OPG66, Rpo7/OPG90, Rpo22/OPG103, Rpo147/OPG105, Rpo18/OPG119, Rpo19/OPG131, Rpo132/OPG151 and Rpo35/OPG156. The same holoenzyme, with the addition of the transcription-specificity factor OPG109, is used for early gene expression.

It localises to the virion. It catalyses the reaction RNA(n) + a ribonucleoside 5'-triphosphate = RNA(n+1) + diphosphate. Its function is as follows. Part of the DNA-dependent RNA polymerase which catalyzes the transcription of viral DNA into RNA using the four ribonucleoside triphosphates as substrates. Responsible for the transcription of early, intermediate and late genes. DNA-dependent RNA polymerase associates with the early transcription factor (ETF), itself composed of OPG118 and OPG133, thereby allowing the early genes transcription. Late transcription, and probably also intermediate transcription, require newly synthesized RNA polymerase. The protein is DNA-directed RNA polymerase 147 kDa polypeptide (OPG105) of Vaccinia virus (strain Ankara) (VACV).